The primary structure comprises 428 residues: MRVVILGSGVVGVASAYYLARAGHEVTVIDREAGPALDTSFANAGQISPGYAAPWAAPGVPLKAVKWMFEKHAPLAIRLDGTRFQLQWMWQMLRNCTTERYALNKGRMVRLAEYSRDCLQALRAETAIQYEGRTGGTLQVFRTQQQLDGAAKDIAVLREANVPFELLSSDELKKAEPALAAVSHKLTGGLRLPGDETGDCQLFTTRLAALAEQLGVKFRFNTRIDALAVAGGKIAGVQCGGEMVRADAYVVALGSYSTNLVASLVKIPVYPLKGYSITAPIVDAAKAPVSTVLDETYKIAITRFDDRIRVGGMAEIVGFDKRLRDARRGTLEMCVNDLFPGGGDTAKATFWTGLRPMTPDGTPIVGRTPVPNLFLNTGHGTLGWTMSCGSGQLLADLMSGKKPVIRADDLSVHRYLSETDGEHRPAYA.

Residue 3–17 (VVILGSGVVGVASAY) coordinates FAD.

It belongs to the DadA oxidoreductase family. The cofactor is FAD.

It carries out the reaction a D-alpha-amino acid + A + H2O = a 2-oxocarboxylate + AH2 + NH4(+). It functions in the pathway amino-acid degradation; D-alanine degradation; NH(3) and pyruvate from D-alanine: step 1/1. Its function is as follows. Oxidative deamination of D-amino acids. The sequence is that of D-amino acid dehydrogenase from Burkholderia pseudomallei (strain 1106a).